The following is a 324-amino-acid chain: Beta-ketoacyl-[acyl-carrier-protein] synthase III (324 aa).

Catalysis depends on residues Cys-114 and His-251. The tract at residues 252–256 (QANRR) is ACP-binding. Asn-281 is an active-site residue.

It belongs to the thiolase-like superfamily. FabH family. In terms of assembly, homodimer.

It localises to the cytoplasm. It catalyses the reaction malonyl-[ACP] + acetyl-CoA + H(+) = 3-oxobutanoyl-[ACP] + CO2 + CoA. It functions in the pathway lipid metabolism; fatty acid biosynthesis. In terms of biological role, catalyzes the condensation reaction of fatty acid synthesis by the addition to an acyl acceptor of two carbons from malonyl-ACP. Catalyzes the first condensation reaction which initiates fatty acid synthesis and may therefore play a role in governing the total rate of fatty acid production. Possesses both acetoacetyl-ACP synthase and acetyl transacylase activities. Its substrate specificity determines the biosynthesis of branched-chain and/or straight-chain of fatty acids. The protein is Beta-ketoacyl-[acyl-carrier-protein] synthase III of Paramagnetospirillum magneticum (strain ATCC 700264 / AMB-1) (Magnetospirillum magneticum).